Here is a 472-residue protein sequence, read N- to C-terminus: MIFVIESKLLQIYRNRNRNINFYTTMDNIMSAEYYLSLYAKYNSKNLDVFRNMLQAIEPSGNNYHILHAYCGIKGLDERFVEELLHRGYSPNETDDDGNYPLHIASKINNNRIVAMLLTHGADPNACDKHNKTPLYYLSGTDDEVIERINLLVQYGAKINNSVDEEGCGPLLACTDPSERVFKKIMSIGFEARIVDKFGKNHIHRHLMSDNPKASTISWMMKLGISPSKPDHDGNTPLHIVCSKTVKNVDIIDLLLPSTDVNKQNKFGDSPLTLLIKTLSPAHLINKLLSTSNVITDQTVNICIFYDRDDVLEIINDKGKQYDSTDFKMAVEVGSIRCVKYLLDNDIICEDAMYYAVLSEYETMVDYLLFNHFSVDFVVNGHTCMSECVRLNNPVILSKLMLHNPTSETMYLTMKAIEKDRLDKSIIIPFIAYFVLMHPDFCKNRRYFTSYKRFVTDYVHEGVSYEVFDDYF.

ANK repeat units lie at residues 97 to 126 (DGNYPLHIASKINNNRIVAMLLTHGADPNA), 130 to 161 (HNKTPLYYLSGTDDEVIERINLLVQYGAKINN), 233 to 263 (DGNTPLHIVCSKTVKNVDIIDLLLPSTDVNK), 267 to 297 (FGDSPLTLLIKTLSPAHLINKLLSTSNVITD), 322 to 351 (YDSTDFKMAVEVGSIRCVKYLLDNDIICED), and 353 to 377 (MYYAVLSEYETMVDYLLFNHFSVDF).

Belongs to the orthopoxvirus OPG037 protein family. May interact with host caspase-9-Apaf-1 complex.

The protein resides in the host cytoplasm. Functionally, inhibits host apoptosis. Acts by associating with host apoptosome. This is Inhibitor of Apoptosis OPG037 (OPG037) from Vaccinia virus (strain Western Reserve) (VACV).